A 77-amino-acid chain; its full sequence is Acyl carrier protein (77 aa).

Residues 1-76 enclose the Carrier domain; the sequence is MENFDKVKDI…DAVKYINSLE (76 aa). Residue Ser-36 is modified to O-(pantetheine 4'-phosphoryl)serine.

Belongs to the acyl carrier protein (ACP) family. Post-translationally, 4'-phosphopantetheine is transferred from CoA to a specific serine of apo-ACP by AcpS. This modification is essential for activity because fatty acids are bound in thioester linkage to the sulfhydryl of the prosthetic group.

The protein resides in the cytoplasm. It functions in the pathway lipid metabolism; fatty acid biosynthesis. Functionally, carrier of the growing fatty acid chain in fatty acid biosynthesis. In Staphylococcus epidermidis (strain ATCC 12228 / FDA PCI 1200), this protein is Acyl carrier protein.